The following is a 546-amino-acid chain: Chaperonin GroEL 5 (546 aa).

Residues 30-33, Lys51, 87-91, Gly415, and Asp495 each bind ATP; these read TLGP and DGTTT.

It belongs to the chaperonin (HSP60) family. In terms of assembly, forms a cylinder of 14 subunits composed of two heptameric rings stacked back-to-back. Interacts with the co-chaperonin GroES.

Its subcellular location is the cytoplasm. It catalyses the reaction ATP + H2O + a folded polypeptide = ADP + phosphate + an unfolded polypeptide.. Its function is as follows. Together with its co-chaperonin GroES, plays an essential role in assisting protein folding. The GroEL-GroES system forms a nano-cage that allows encapsulation of the non-native substrate proteins and provides a physical environment optimized to promote and accelerate protein folding. This chain is Chaperonin GroEL 5, found in Paraburkholderia xenovorans (strain LB400).